Reading from the N-terminus, the 552-residue chain is Olefin beta-lactone synthetase (552 aa).

Residues 182–190, 316–321, Asp-425, and Arg-440 each bind ATP; these read TSGSTGVPK and TPYGAT.

Belongs to the ATP-dependent AMP-binding enzyme family. As to quaternary structure, monomer.

The catalysed reaction is a (2R,3S)-2-alkyl-3-hydroxyalkanoate + ATP = a cis-3-alkyl-4-alkyloxetan-2-one + AMP + diphosphate. Its function is as follows. Involved in olefin biosynthesis. Catalyzes the conversion of beta-hydroxy acid substrates to beta-lactones in the presence of ATP. Can use all four stereoisomers of 2-hexyl-3-hydroxydecanoic acid. The sequence is that of Olefin beta-lactone synthetase from Stenotrophomonas maltophilia (strain K279a).